A 180-amino-acid polypeptide reads, in one-letter code: Insulin-like growth factor 2 (180 aa).

An N-terminal signal peptide occupies residues 1 to 24 (MGIPMGKSMLVLLTFLAFASCCIA). The segment at 25-52 (AYRPSETLCGGELVDTLQFVCGDRGFYF) is b. Disulfide bonds link cysteine 33-cysteine 71, cysteine 45-cysteine 84, and cysteine 70-cysteine 75. Residues 53-64 (SRPASRVSRRSR) form a c region. The tract at residues 65-85 (GIVEECCFRSCDLALLETYCA) is a. A d region spans residues 86–91 (TPAKSE). A propeptide spans 92 to 180 (RDVSTPPTVL…APPEMASNRK (89 aa)) (e peptide). Residues threonine 96, threonine 99, and threonine 163 are each glycosylated (O-linked (GalNAc...) threonine). The segment at 161-180 (LPTQDPAHGGAPPEMASNRK) is disordered.

This sequence belongs to the insulin family. In terms of assembly, interacts with MYORG; this interaction is required for IGF2 secretion. Interacts with integrins ITGAV:ITGB3 and ITGA6:ITGB4; integrin-binding is required for IGF2 signaling. Interacts with IGFBP2. O-glycosylated with core 1 or possibly core 8 glycans. Thr-96 is a minor glycosylation site compared to Thr-99. In terms of processing, proteolytically processed by PCSK4, proIGF2 is cleaved at Arg-128 and Arg-92 to generate big-IGF2 and mature IGF2. Expressed in heart, placenta, lung, liver, muscle, kidney, tongue, limb, eye and pancreas.

It is found in the secreted. Functionally, the insulin-like growth factors possess growth-promoting activity. Major fetal growth hormone in mammals. Plays a key role in regulating fetoplacental development. IGF2 is influenced by placental lactogen. Also involved in tissue differentiation. In adults, involved in glucose metabolism in adipose tissue, skeletal muscle and liver. Acts as a ligand for integrin which is required for IGF2 signaling. Positively regulates myogenic transcription factor MYOD1 function by facilitating the recruitment of transcriptional coactivators, thereby controlling muscle terminal differentiation. Inhibits myoblast differentiation and modulates metabolism via increasing the mitochondrial respiration rate. Its function is as follows. Preptin undergoes glucose-mediated co-secretion with insulin, and acts as a physiological amplifier of glucose-mediated insulin secretion. Exhibits osteogenic properties by increasing osteoblast mitogenic activity through phosphoactivation of MAPK1 and MAPK3. The sequence is that of Insulin-like growth factor 2 from Homo sapiens (Human).